The primary structure comprises 333 residues: Probable G-protein coupled receptor 33 (333 aa).

The Extracellular portion of the chain corresponds to 1-30; it reads MDLINSTDYLINASTLVRNSTQFLAPASKM. N-linked (GlcNAc...) asparagine glycosylation is found at N5, N12, and N19. Residues 31–53 traverse the membrane as a helical segment; the sequence is IIALSLYISSIIGTITNGLYLWV. At 54 to 64 the chain is on the cytoplasmic side; it reads LRFKMKQTVNT. A helical membrane pass occupies residues 65–86; sequence LLFFHLILSYFISTMILPFMAT. Residues 87–103 lie on the Extracellular side of the membrane; it reads SQLQDNHWNFGTALCKV. C101 and C179 are disulfide-bonded. The chain crosses the membrane as a helical span at residues 104–124; sequence FNGTLSLGMFTSVFFLSAIGL. Residues 125–143 are Cytoplasmic-facing; the sequence is DRYLLTLHPVWSQQHRTPR. Residues 144–165 form a helical membrane-spanning segment; the sequence is WASSIVLGVWISAAALSIPYLI. Topologically, residues 166–209 are extracellular; the sequence is FRQTHHDRKGKVTCQNNYAVSTNWESKEMQALRQWIHVACFISR. The chain crosses the membrane as a helical span at residues 210–230; it reads FLLGFLLPFFIIIFCYERVAS. At 231 to 246 the chain is on the cytoplasmic side; sequence KVKERSLFKSSKPFKV. Residues 247 to 268 form a helical membrane-spanning segment; that stretch reads MMTAIISFFVCWMPYHIHQGLL. At 269-283 the chain is on the extracellular side; the sequence is LTMNQSLLLELTLIL. N-linked (GlcNAc...) asparagine glycosylation occurs at N272. A helical membrane pass occupies residues 284–303; sequence TVLTTSFNTIFSPTLYLFVG. Residues 304-333 are Cytoplasmic-facing; that stretch reads ENFKKVFKKSILALFESTFSEDSSVERTQT.

It belongs to the G-protein coupled receptor 1 family.

Its subcellular location is the cell membrane. Orphan receptor; could be a chemoattractant receptor. This Pan paniscus (Pygmy chimpanzee) protein is Probable G-protein coupled receptor 33 (GPR33).